Reading from the N-terminus, the 853-residue chain is Putative dipeptidyl aminopeptidase C14C4.15c (853 aa).

Residues 1 to 26 (MNAYEGDTLNNHGKSSTRQHWRKRSA) form a disordered region. Residues 1-65 (MNAYEGDTLN…AKKRRRKKHR (65 aa)) are Cytoplasmic-facing. Over residues 15-25 (SSTRQHWRKRS) the composition is skewed to basic residues. A helical; Signal-anchor for type II membrane protein transmembrane segment spans residues 66 to 86 (YIYLAVCLFFLASVLSCAIIF). Over 87-853 (RFYLHTNREN…SGHFHHALYC (767 aa)) the chain is Lumenal. 5 N-linked (GlcNAc...) asparagine glycosylation sites follow: Asn96, Asn102, Asn472, Asn483, and Asn613. Active-site charge relay system residues include Ser719, Asp795, and His828.

It belongs to the peptidase S9B family.

It is found in the vacuole membrane. The chain is Putative dipeptidyl aminopeptidase C14C4.15c from Schizosaccharomyces pombe (strain 972 / ATCC 24843) (Fission yeast).